A 193-amino-acid polypeptide reads, in one-letter code: uncharacterized protein (193 aa).

Transmembrane regions (helical) follow at residues 40–56 (LYIA…LKLI), 63–79 (AAGL…SSLC), 86–110 (CSGY…IVSC), and 117–138 (FIFP…FQIY). The disordered stretch occupies residues 158–193 (TTTKLSRSSSAPDLSCPSLSTQPTSPNQSLSAYKKY).

It belongs to the chlamydial CPn_0442/CT_006/TC_0274 family.

It localises to the cell membrane. This is an uncharacterized protein from Chlamydia muridarum (strain MoPn / Nigg).